Reading from the N-terminus, the 417-residue chain is Phosphoglycerate kinase 1 (417 aa).

Residue S2 is modified to N-acetylserine. Phosphoserine is present on residues S2 and S4. Residue K6 is modified to N6-succinyllysine. The residue at position 11 (K11) is an N6-acetyllysine. (2R)-3-phosphoglycerate contacts are provided by V23, D24, F25, N26, Q38, and R39. Residues 38–43 (QRIKAA) form a mitochondrial targeting region exposed following cis-trans isomerization by PIN1 and recognized by the TOM complex for mitochondrial translocation of the protein region. At K48 the chain carries N6-acetyllysine; alternate. K48 carries the N6-succinyllysine; alternate modification. 4 residues coordinate (2R)-3-phosphoglycerate: S62, H63, G65, and R66. K75 carries the post-translational modification N6-acetyllysine. Y76 bears the Phosphotyrosine mark. N6-acetyllysine occurs at positions 86 and 91. K97 is modified (N6-acetyllysine; alternate). The residue at position 97 (K97) is an N6-(2-hydroxyisobutyryl)lysine; alternate. 2 residues coordinate (2R)-3-phosphoglycerate: L122 and R123. K131 carries the post-translational modification N6-acetyllysine; alternate. K131 bears the N6-malonyllysine; alternate mark. K146 carries the N6-acetyllysine modification. (2R)-3-phosphoglycerate-binding residues include H170 and R171. An N6-succinyllysine modification is found at K191. Residue Y196 is modified to Phosphotyrosine. The residue at position 199 (K199) is an N6-acetyllysine. S203 bears the Phosphoserine mark. Residue G214 participates in ADP binding. G214 is a CDP binding site. The AMP site is built by A215 and K216. A215 lines the ATP pocket. A215 provides a ligand contact to Mg(2+). Position 216 is an N6-(2-hydroxyisobutyryl)lysine (K216). Mg(2+) contacts are provided by A218 and D219. D219 serves as a coordination point for CDP. Residue K220 participates in AMP binding. K220 serves as a coordination point for ATP. K220 is modified (N6-(2-hydroxyisobutyryl)lysine). G238 lines the ADP pocket. Residue G238 coordinates CDP. Position 239 (G239) interacts with AMP. G239 serves as a coordination point for ATP. 2 positions are modified to N6-acetyllysine: K267 and K291. Residue G313 coordinates AMP. G313 provides a ligand contact to ATP. An N6-(2-hydroxyisobutyryl)lysine modification is found at K323. CDP contacts are provided by G338, V340, and F343. Position 343 (F343) interacts with ADP. An AMP-binding site is contributed by E344. E344 contacts ATP. K361 bears the N6-acetyllysine mark. 2 residues coordinate ATP: D375 and T376. A Mg(2+)-binding site is contributed by D375.

Belongs to the phosphoglycerate kinase family. In terms of assembly, monomer. Interacts with kinase MAPK1/ERK2; the interaction is direct, occurs under hypoxic conditions, and promotes its interaction with PIN1. Interacts with peptidyl-prolyl cis-trans isomerase PIN1; the interaction is direct, occurs under hypoxic conditions, and targets the protein to the mitochondrion by promoting interactions with the TOM complex. Interacts with mitochondrial circRNA mcPGK1 (via its 2nd stem-loop); the interaction is direct and targets the protein to the mitochondrion by promoting interactions with the TOM complex. Interacts with pyruvate dehydrogenase kinase PDK1; the interaction is direct, occurs under hypoxic conditions and leads to PDK1-mediated inhibition of pyruvate dehydrogenase complex activity. Mg(2+) serves as cofactor. Post-translationally, phosphorylated at Ser-203 by MAPK1/ERK2 under hypoxic conditions, which promotes its mitochondrial targeting.

Its subcellular location is the cytoplasm. The protein localises to the cytosol. It is found in the mitochondrion matrix. The catalysed reaction is (2R)-3-phosphoglycerate + ATP = (2R)-3-phospho-glyceroyl phosphate + ADP. The enzyme catalyses L-seryl-[protein] + ATP = O-phospho-L-seryl-[protein] + ADP + H(+). Its pathway is carbohydrate degradation; glycolysis; pyruvate from D-glyceraldehyde 3-phosphate: step 2/5. Functionally, catalyzes one of the two ATP producing reactions in the glycolytic pathway via the reversible conversion of 1,3-diphosphoglycerate to 3-phosphoglycerate. Both L- and D- forms of purine and pyrimidine nucleotides can be used as substrates, but the activity is much lower on pyrimidines. In addition to its role as a glycolytic enzyme, it seems that PGK-1 acts as a polymerase alpha cofactor protein (primer recognition protein). Acts as a protein kinase when localized to the mitochondrion where it phosphorylates pyruvate dehydrogenase kinase PDK1 to inhibit pyruvate dehydrogenase complex activity and suppress the formation of acetyl-coenzyme A from pyruvate, and consequently inhibit oxidative phosphorylation and promote glycolysis. May play a role in sperm motility. In Sus scrofa (Pig), this protein is Phosphoglycerate kinase 1 (PGK1).